Reading from the N-terminus, the 355-residue chain is 3-isopropylmalate dehydrogenase (355 aa).

The substrate site is built by Arg-90, Arg-100, Arg-128, and Asp-222. 3 residues coordinate Mg(2+): Asp-222, Asp-246, and Asp-250. 280-292 (GSAPDIAGKGIAN) provides a ligand contact to NAD(+).

The protein belongs to the isocitrate and isopropylmalate dehydrogenases family. LeuB type 1 subfamily. Homodimer. Requires Mg(2+) as cofactor. It depends on Mn(2+) as a cofactor.

The protein localises to the cytoplasm. It carries out the reaction (2R,3S)-3-isopropylmalate + NAD(+) = 4-methyl-2-oxopentanoate + CO2 + NADH. The protein operates within amino-acid biosynthesis; L-leucine biosynthesis; L-leucine from 3-methyl-2-oxobutanoate: step 3/4. Its function is as follows. Catalyzes the oxidation of 3-carboxy-2-hydroxy-4-methylpentanoate (3-isopropylmalate) to 3-carboxy-4-methyl-2-oxopentanoate. The product decarboxylates to 4-methyl-2 oxopentanoate. This Burkholderia lata (strain ATCC 17760 / DSM 23089 / LMG 22485 / NCIMB 9086 / R18194 / 383) protein is 3-isopropylmalate dehydrogenase.